The primary structure comprises 72 residues: Translation initiation factor IF-1 (72 aa).

Residues M1–K72 enclose the S1-like domain.

Belongs to the IF-1 family. As to quaternary structure, component of the 30S ribosomal translation pre-initiation complex which assembles on the 30S ribosome in the order IF-2 and IF-3, IF-1 and N-formylmethionyl-tRNA(fMet); mRNA recruitment can occur at any time during PIC assembly.

Its subcellular location is the cytoplasm. Functionally, one of the essential components for the initiation of protein synthesis. Stabilizes the binding of IF-2 and IF-3 on the 30S subunit to which N-formylmethionyl-tRNA(fMet) subsequently binds. Helps modulate mRNA selection, yielding the 30S pre-initiation complex (PIC). Upon addition of the 50S ribosomal subunit IF-1, IF-2 and IF-3 are released leaving the mature 70S translation initiation complex. The sequence is that of Translation initiation factor IF-1 from Jannaschia sp. (strain CCS1).